The chain runs to 194 residues: Imidazoleglycerol-phosphate dehydratase (194 aa).

The protein belongs to the imidazoleglycerol-phosphate dehydratase family.

Its subcellular location is the cytoplasm. It catalyses the reaction D-erythro-1-(imidazol-4-yl)glycerol 3-phosphate = 3-(imidazol-4-yl)-2-oxopropyl phosphate + H2O. The protein operates within amino-acid biosynthesis; L-histidine biosynthesis; L-histidine from 5-phospho-alpha-D-ribose 1-diphosphate: step 6/9. The chain is Imidazoleglycerol-phosphate dehydratase from Streptococcus sanguinis (strain SK36).